The following is a 236-amino-acid chain: Auxin-responsive protein IAA16 (236 aa).

The EAR-like (transcriptional repression) signature appears at 9–13 (LRLGL). The segment at 82-110 (KNVMSGQKPTTGDATEGNDKTSGSSGATS) is disordered. Residues 85–94 (MSGQKPTTGD) are compositionally biased toward polar residues. The PB1 domain occupies 118 to 218 (VAYVKVSMDG…SCKRIRIMKG (101 aa)).

Belongs to the Aux/IAA family. As to quaternary structure, homodimers and heterodimers.

The protein resides in the nucleus. In terms of biological role, aux/IAA proteins are short-lived transcriptional factors that function as repressors of early auxin response genes at low auxin concentrations. Repression is thought to result from the interaction with auxin response factors (ARFs), proteins that bind to the auxin-responsive promoter element (AuxRE). Formation of heterodimers with ARF proteins may alter their ability to modulate early auxin response genes expression. This is Auxin-responsive protein IAA16 (IAA16) from Arabidopsis thaliana (Mouse-ear cress).